A 109-amino-acid chain; its full sequence is uncharacterized protein (109 aa).

Residues 1 to 25 (METKPNALTGTSLSSTSGQTTQKSI) form a disordered region. Residues 8-22 (LTGTSLSSTSGQTTQ) are compositionally biased toward low complexity. The chain crosses the membrane as a helical span at residues 42-62 (TFGLMAILNLALLLWTLLATL). Residues 84 to 109 (TTLQKNTPSAKNGLKNTTNKHSHEDM) form a disordered region. Positions 91–102 (PSAKNGLKNTTN) are enriched in polar residues.

The protein resides in the host membrane. This is an uncharacterized protein from Bdellovibrio phage phiMH2K (Bacteriophage phiMH2K).